Consider the following 834-residue polypeptide: Kinesin-like protein KIF18B (834 aa).

Residues 9–353 (VVRVVVRVRP…LKYADRAKEI (345 aa)) form the Kinesin motor domain. 111 to 118 (GATGAGKT) is an ATP binding site. Positions 368-404 (ISQYATICQQLQAEVAFLREKLQMYEAGAQALQQQCS) form a coiled coil. 4 disordered regions span residues 400–508 (QQQC…ADHS), 602–642 (LGAP…NLEM), 655–686 (RGSL…RVCP), and 800–834 (KKPN…TESY). A compositionally biased stretch (low complexity) spans 411-432 (SIPQSLSSSSLQPGPSSQSSTL). The residue at position 431 (Thr-431) is a Phosphothreonine. Polar residues predominate over residues 462–474 (EQEQCPQDKQCPT). Phosphoserine is present on Ser-484. The span at 611–620 (TSDKTFQKPT) shows a compositional bias: basic and acidic residues. The Nuclear localization signal signature appears at 619–627 (PTKEKKRKL). 2 positions are modified to phosphoserine: Ser-634 and Ser-657. The residue at position 669 (Thr-669) is a Phosphothreonine. Ser-814 is subject to Phosphoserine.

This sequence belongs to the TRAFAC class myosin-kinesin ATPase superfamily. Kinesin family. As to quaternary structure, interacts with MAPRE1; this interaction is required for efficient accumulation at microtubule plus ends. Interacts with KIF2C at microtubule tips; this interaction increases the affinity of both partners for microtubule plus ends and is required for robust microtubule depolymerization. KIF2C phosphorylation by AURKA or AURKB strongly reduces KIF18B-binding.

It is found in the nucleus. The protein localises to the cytoplasm. It localises to the cytoskeleton. Its function is as follows. In complex with KIF2C, constitutes the major microtubule plus-end depolymerizing activity in mitotic cells. Its major role may be to transport KIF2C and/or MAPRE1 along microtubules. The protein is Kinesin-like protein KIF18B (Kif18b) of Mus musculus (Mouse).